Here is a 490-residue protein sequence, read N- to C-terminus: POC1 centriolar protein homolog B (490 aa).

WD repeat units lie at residues 16 to 55 (GHKD…RAFR), 58 to 97 (GHTD…ESTV), 100 to 139 (AHTA…FLYS), 142 to 181 (RHTN…CINI), 184 to 223 (DYGG…LIQH), 226 to 265 (VHNA…LIYT), and 268 to 307 (GHKG…LNYR). Positions 375 to 388 (DGASSSRAQFTSGM) are enriched in polar residues. Positions 375 to 427 (DGASSSRAQFTSGMDSGPFRTHTQAREEEDENQEERFAGGMTASPAERSGIPS) are disordered. Residues 431–463 (STLENIVQQLDILTQTVAVLEERLTLTEDKLRT) are a coiled coil.

Belongs to the WD repeat POC1 family.

It localises to the cytoplasm. The protein localises to the cytoskeleton. Its subcellular location is the microtubule organizing center. The protein resides in the centrosome. It is found in the centriole. Its function is as follows. Plays an important role in centriole assembly and/or stability and ciliogenesis. Involved in early steps of centriole duplication, as well as in the later steps of centriole length control. The protein is POC1 centriolar protein homolog B of Danio rerio (Zebrafish).